The chain runs to 150 residues: Globin-3 (150 aa).

One can recognise a Globin domain in the interval 11 to 150 (PLTAADKTKI…IICILLNSAY (140 aa)). Heme b is bound by residues histidine 74 and histidine 106.

Belongs to the globin family. Monomer.

The chain is Globin-3 from Mordacia mordax (Southern hemisphere lamprey).